A 207-amino-acid polypeptide reads, in one-letter code: Ribosomal RNA small subunit methyltransferase G (207 aa).

S-adenosyl-L-methionine-binding positions include Gly-77, Phe-82, 100-102, and Arg-141; that span reads ERS.

The protein belongs to the methyltransferase superfamily. RNA methyltransferase RsmG family.

Its subcellular location is the cytoplasm. Its function is as follows. Specifically methylates the N7 position of a guanine in 16S rRNA. The sequence is that of Ribosomal RNA small subunit methyltransferase G from Borrelia hermsii (strain HS1 / DAH).